The chain runs to 362 residues: Ribosomal RNA large subunit methyltransferase M (362 aa).

Residues Ser-194, 227–230, Asp-246, Asp-266, and Asp-284 contribute to the S-adenosyl-L-methionine site; that span reads CPGG. Lys-313 acts as the Proton acceptor in catalysis.

This sequence belongs to the class I-like SAM-binding methyltransferase superfamily. RNA methyltransferase RlmE family. RlmM subfamily. Monomer.

The protein resides in the cytoplasm. The catalysed reaction is cytidine(2498) in 23S rRNA + S-adenosyl-L-methionine = 2'-O-methylcytidine(2498) in 23S rRNA + S-adenosyl-L-homocysteine + H(+). Catalyzes the 2'-O-methylation at nucleotide C2498 in 23S rRNA. The sequence is that of Ribosomal RNA large subunit methyltransferase M from Aggregatibacter aphrophilus (strain NJ8700) (Haemophilus aphrophilus).